The chain runs to 393 residues: Beta-1,3-galactosyltransferase 7 (393 aa).

Residues 9–29 (VISLKWVPFLCISFFALGAIF) form a helical; Signal-anchor for type II membrane protein membrane-spanning segment. A disordered region spans residues 89–112 (SLDKSVSTLSSTRSSQEMVDGSET). Low complexity predominate over residues 93–103 (SVSTLSSTRSS).

This sequence belongs to the glycosyltransferase 31 family. Requires Mn(2+) as cofactor. As to expression, expressed in leaves, stems, flowers and siliques.

Its subcellular location is the golgi apparatus membrane. It functions in the pathway protein modification; protein glycosylation. Functionally, beta-1,3-galactosyltransferase that transfers galactose from UDP-galactose to substrates with a terminal glycosyl residue. The polypeptide is Beta-1,3-galactosyltransferase 7 (B3GALT7) (Arabidopsis thaliana (Mouse-ear cress)).